The primary structure comprises 1794 residues: Non-reducing polyketide synthase nscA (1794 aa).

The tract at residues 19–256 (DLKDLFRRLH…PLPVYDGLCH (238 aa)) is N-terminal acylcarrier protein transacylase domain (SAT). The Ketosynthase family 3 (KS3) domain occupies 389-822 (ASKLAIVGMA…GGNTTVLLED (434 aa)). Residues 428–440 (DRFDLNTHYDPTG) show a composition bias toward basic and acidic residues. Residues 428 to 448 (DRFDLNTHYDPTGKTENATQT) form a disordered region. Residues cysteine 562, histidine 697, and histidine 740 each act as for beta-ketoacyl synthase activity in the active site. Residues 927 to 1230 (TFTGQGAYYS…SVISSCRRNE (304 aa)) form a malonyl-CoA:ACP transacylase (MAT) domain region. The tract at residues 1314–1633 (TSLVHQITTE…RLLMDRFFSP (320 aa)) is product template (PT) domain. An N-terminal hotdog fold region spans residues 1318-1454 (HQITTETVEA…CVVRFEDPAA (137 aa)). The region spanning 1318 to 1628 (HQITTETVEA…FRRVPRLLMD (311 aa)) is the PKS/mFAS DH domain. The active-site Proton acceptor; for dehydratase activity is the histidine 1350. The segment at 1482-1628 (ASKLSKPLAY…FRRVPRLLMD (147 aa)) is C-terminal hotdog fold. The Proton donor; for dehydratase activity role is filled by aspartate 1539. Residues 1637-1719 (SHTEKQLQET…ATSDRGDSTD (83 aa)) are disordered. Positions 1644-1655 (QETAPSATNVKK) are enriched in polar residues. The Carrier domain occupies 1717–1794 (STDAGVVGQC…EMTAWLEEYC (78 aa)). Serine 1754 is subject to O-(pantetheine 4'-phosphoryl)serine.

The cofactor is pantetheine 4'-phosphate.

It participates in secondary metabolite biosynthesis. Functionally, non-reducing polyketide synthase; part of the gene cluster that mediates the biosynthesis of neosartoricin, a prenylated anthracenone that exhibits T-cell antiproliferative activity, suggestive of a physiological role as an immunosuppressive agent. The non-reducing polyketide synthase nscA probably synthesizes and cyclizes the decaketide backbone. The hydrolase nscB then mediates the product release through hydrolysis followed by spontaneous decarboxylation. The prenyltransferase nscD catalyzes the addition of the dimethylallyl group to the aromatic C5. The FAD-dependent monooxygenase nscC is then responsible for the stereospecific hydroxylation at C2. There is no gene encoding O-acetyltransferase in the nsc gene cluster; thus, the last step of 2-O-acetylation leading to neosartoricin may be catalyzed by an unidentified O-acetyltransferase. The polypeptide is Non-reducing polyketide synthase nscA (Aspergillus fumigatus (strain ATCC MYA-4609 / CBS 101355 / FGSC A1100 / Af293) (Neosartorya fumigata)).